The following is a 428-amino-acid chain: Histidine--tRNA ligase (428 aa).

Belongs to the class-II aminoacyl-tRNA synthetase family. As to quaternary structure, homodimer.

Its subcellular location is the cytoplasm. The enzyme catalyses tRNA(His) + L-histidine + ATP = L-histidyl-tRNA(His) + AMP + diphosphate + H(+). This is Histidine--tRNA ligase from Chlamydia trachomatis serovar L2 (strain ATCC VR-902B / DSM 19102 / 434/Bu).